Consider the following 225-residue polypeptide: Orotate phosphoribosyltransferase (225 aa).

A 5-phospho-alpha-D-ribose 1-diphosphate-binding site is contributed by Lys32. 40-41 (FF) contacts orotate. 5-phospho-alpha-D-ribose 1-diphosphate-binding positions include 78–79 (YK), Arg104, Lys105, Lys108, His110, and 129–137 (DDVISAGTS). Ser133 and Arg161 together coordinate orotate.

The protein belongs to the purine/pyrimidine phosphoribosyltransferase family. PyrE subfamily. In terms of assembly, homodimer. Mg(2+) is required as a cofactor.

The catalysed reaction is orotidine 5'-phosphate + diphosphate = orotate + 5-phospho-alpha-D-ribose 1-diphosphate. It functions in the pathway pyrimidine metabolism; UMP biosynthesis via de novo pathway; UMP from orotate: step 1/2. Its function is as follows. Catalyzes the transfer of a ribosyl phosphate group from 5-phosphoribose 1-diphosphate to orotate, leading to the formation of orotidine monophosphate (OMP). In Cupriavidus metallidurans (strain ATCC 43123 / DSM 2839 / NBRC 102507 / CH34) (Ralstonia metallidurans), this protein is Orotate phosphoribosyltransferase.